Reading from the N-terminus, the 48-residue chain is Small, acid-soluble spore protein G (48 aa).

Residues 1–16 (MSENRHENEENRRDAA) are compositionally biased toward basic and acidic residues. The tract at residues 1–48 (MSENRHENEENRRDAAVAKVQNSGNAKVVVSVNTDQDQAQAQSQDGED) is disordered. The span at 35-48 (DQDQAQAQSQDGED) shows a compositional bias: low complexity.

This is Small, acid-soluble spore protein G (sspG) from Bacillus subtilis (strain 168).